The chain runs to 368 residues: Proton-coupled zinc antiporter SLC30A8 (368 aa).

The Cytoplasmic segment spans residues 1–78 (MEFLERTYLV…AKWRLCAASA (78 aa)). Zn(2+)-binding residues include H51, C52, and H53. The short motif at 51–53 (HCH) is the HCH Motif; seals regulatory zinc-binding pocket element. Residues 79 to 99 (ICFFFMVAEVVGGHVAGSLAV) traverse the membrane as a helical segment. Over 100 to 102 (LTD) the chain is Lumenal, vesicle. Residues 103-123 (AAHLLIDLTSFLLSLFSLWLS) form a helical membrane-spanning segment. Zn(2+) is bound by residues H105 and D109. Topologically, residues 124–139 (SRPPSKRLTFGWYRAE) are cytoplasmic. A helical membrane pass occupies residues 140 to 160 (ILGALLSVLCIWVVTGVLVYL). The Lumenal, vesicle portion of the chain corresponds to 161-174 (ACERLLYPDYQIQA). A helical membrane pass occupies residues 175 to 195 (GIMITVSGCAVAANIVLTLIL). At 196-216 (HQRHLGHNHKDAQANASVRAA) the chain is on the cytoplasmic side. Residues 217–237 (FVHALGDVFQSTSVLISALII) form a helical membrane-spanning segment. 2 residues coordinate Zn(2+): H219 and D223. At 238-245 (YFKPDYKM) the chain is on the lumenal, vesicle side. The helical transmembrane segment at 246–266 (ADPVCTFISSVLALASTVMIL) threads the bilayer. The Cytoplasmic segment spans residues 267-368 (KDFSILLMEG…SCLLCEDPQD (102 aa)). Residues H300, H317, H344, E351, C360, and C363 each contribute to the Zn(2+) site.

The protein belongs to the cation diffusion facilitator (CDF) transporter (TC 2.A.4) family. SLC30A subfamily. In terms of assembly, homodimer. Expressed in endocrine pancreatic islet alpha and beta cells. May be more abundant in beta cells than in alpha cells. Expressed in cubical epithelium lining thyroid follicles (at protein level). In the adrenal gland, detected in the cortex, but not in the medulla (at protein level).

The protein resides in the cytoplasmic vesicle. It localises to the secretory vesicle membrane. Its subcellular location is the cell membrane. The enzyme catalyses Zn(2+)(in) + 2 H(+)(out) = Zn(2+)(out) + 2 H(+)(in). In terms of biological role, proton-coupled zinc ion antiporter mediating the entry of zinc into the lumen of pancreatic beta cell secretory granules, thereby regulating insulin secretion. This is Proton-coupled zinc antiporter SLC30A8 from Rattus norvegicus (Rat).